Here is a 216-residue protein sequence, read N- to C-terminus: Probable nicotinate-nucleotide adenylyltransferase (216 aa).

Belongs to the NadD family.

It carries out the reaction nicotinate beta-D-ribonucleotide + ATP + H(+) = deamido-NAD(+) + diphosphate. Its pathway is cofactor biosynthesis; NAD(+) biosynthesis; deamido-NAD(+) from nicotinate D-ribonucleotide: step 1/1. Functionally, catalyzes the reversible adenylation of nicotinate mononucleotide (NaMN) to nicotinic acid adenine dinucleotide (NaAD). The chain is Probable nicotinate-nucleotide adenylyltransferase from Shewanella pealeana (strain ATCC 700345 / ANG-SQ1).